Consider the following 165-residue polypeptide: V-type proton ATPase 16 kDa proteolipid subunit (165 aa).

The Lumenal segment spans residues 1–12; sequence MSTVFNGDETAP. A helical transmembrane segment spans residues 13–33; that stretch reads FFGFLGAAAALVFSCMGAAYG. Topologically, residues 34–55 are cytoplasmic; that stretch reads TAKSGVGVASMGVMRPELVMKS. The chain crosses the membrane as a helical span at residues 56–76; the sequence is IVPVVMAGVLGIYGLIIAVII. At 77–95 the chain is on the lumenal side; it reads STGINPKAKSYYLFDGYAH. Residues 96 to 117 traverse the membrane as a helical segment; the sequence is LSSGLACGLAGLSAGMAIGIVG. The Cytoplasmic segment spans residues 118-129; the sequence is DAGVRANAQQPK. A helical membrane pass occupies residues 130–155; sequence LFVGMILILIFAEALALYGLIVGIIL. At 156-165 the chain is on the lumenal side; that stretch reads SSRAGQSRAD.

Belongs to the V-ATPase proteolipid subunit family. As to quaternary structure, V-ATPase is a heteromultimeric enzyme composed of a peripheral catalytic V1 complex (main components: subunits A, B, C, D, E, and F) attached to an integral membrane V0 proton pore complex (main component: the proteolipid protein; which is present as a hexamer that forms the proton-conducting pore).

The protein resides in the vacuole membrane. Its function is as follows. Proton-conducting pore forming subunit of the membrane integral V0 complex of vacuolar ATPase. V-ATPase is responsible for acidifying a variety of intracellular compartments in eukaryotic cells. The polypeptide is V-type proton ATPase 16 kDa proteolipid subunit (VMAC1) (Mesembryanthemum crystallinum (Common ice plant)).